Reading from the N-terminus, the 134-residue chain is ATP synthase epsilon chain (134 aa).

Belongs to the ATPase epsilon chain family. In terms of assembly, F-type ATPases have 2 components, CF(1) - the catalytic core - and CF(0) - the membrane proton channel. CF(1) has five subunits: alpha(3), beta(3), gamma(1), delta(1), epsilon(1). CF(0) has three main subunits: a, b and c.

The protein localises to the cell membrane. In terms of biological role, produces ATP from ADP in the presence of a proton gradient across the membrane. The protein is ATP synthase epsilon chain of Staphylococcus aureus (strain USA300).